Here is a 307-residue protein sequence, read N- to C-terminus: MGGLRPWSRYGLLVVAHLLALGLGAVVFQALEGPPACRLQAELRAELAAFQAEHRACLPPGALEELLGTALATQAHGVSTLGNSSEGRTWDLPSALLFAASILTTTGYGHMAPLSPGGKAFCMVYAALGLPASLALVATLRHCLLPVLSRPRAWVAVHWQLSPARAALLQAVALGLLVASSFVLLPALVLWGLQGDCSLLGAVYFCFSSLSTIGLEDLLPGRGRSLHPVIYHLGQLALLGYLLLGLLAMLLAVETFSELPQVRAMGKFFRPSGPVTAEDQGGILGQDELALSTLPPAAPASGQAPAC.

The Cytoplasmic portion of the chain corresponds to 1 to 10 (MGGLRPWSRY). Residues 11-31 (GLLVVAHLLALGLGAVVFQAL) traverse the membrane as a helical segment. Asparagine 83 is a glycosylation site (N-linked (GlcNAc...) asparagine). The segment at residues 92–119 (LPSALLFAASILTTTGYGHMAPLSPGGK) is an intramembrane region (pore-forming). Residues 120-140 (AFCMVYAALGLPASLALVATL) form a helical membrane-spanning segment. Residues 141 to 170 (RHCLLPVLSRPRAWVAVHWQLSPARAALLQ) are Cytoplasmic-facing. Residues 171 to 191 (AVALGLLVASSFVLLPALVLW) form a helical membrane-spanning segment. An intramembrane region (pore-forming) is located at residues 199–227 (LLGAVYFCFSSLSTIGLEDLLPGRGRSLH). Residues 233-253 (LGQLALLGYLLLGLLAMLLAV) form a helical membrane-spanning segment. Topologically, residues 254 to 307 (ETFSELPQVRAMGKFFRPSGPVTAEDQGGILGQDELALSTLPPAAPASGQAPAC) are cytoplasmic.

This sequence belongs to the two pore domain potassium channel (TC 1.A.1.8) family. Homodimer.

The protein resides in the membrane. Functionally, probable potassium channel subunit. No channel activity observed in vitro as protein remains in the endoplasmic reticulum. May need to associate with an as yet unknown partner in order to reach the plasma membrane. The polypeptide is Potassium channel subfamily K member 7 (KCNK7) (Homo sapiens (Human)).